A 287-amino-acid chain; its full sequence is Polyamine aminopropyltransferase (287 aa).

Residues 5–238 (ETWHETLHDH…GIMTFAWASQ (234 aa)) form the PABS domain. Gln-33 contacts S-methyl-5'-thioadenosine. Spermidine contacts are provided by His-64 and Asp-88. Residues Glu-108 and 140–141 (DG) contribute to the S-methyl-5'-thioadenosine site. Catalysis depends on Asp-158, which acts as the Proton acceptor. 158 to 161 (DCTD) provides a ligand contact to spermidine. Pro-165 lines the S-methyl-5'-thioadenosine pocket.

Belongs to the spermidine/spermine synthase family. Homodimer or homotetramer.

It localises to the cytoplasm. The catalysed reaction is S-adenosyl 3-(methylsulfanyl)propylamine + putrescine = S-methyl-5'-thioadenosine + spermidine + H(+). The protein operates within amine and polyamine biosynthesis; spermidine biosynthesis; spermidine from putrescine: step 1/1. Its function is as follows. Catalyzes the irreversible transfer of a propylamine group from the amino donor S-adenosylmethioninamine (decarboxy-AdoMet) to putrescine (1,4-diaminobutane) to yield spermidine. This Sodalis glossinidius (strain morsitans) protein is Polyamine aminopropyltransferase.